We begin with the raw amino-acid sequence, 221 residues long: Small ribosomal subunit protein uS3 (221 aa).

In terms of domain architecture, KH type-2 spans 39–108 (IRKFVKKELF…NVLINIVEVK (70 aa)).

It belongs to the universal ribosomal protein uS3 family. In terms of assembly, part of the 30S ribosomal subunit. Forms a tight complex with proteins S10 and S14.

In terms of biological role, binds the lower part of the 30S subunit head. Binds mRNA in the 70S ribosome, positioning it for translation. The protein is Small ribosomal subunit protein uS3 of Clostridium beijerinckii (strain ATCC 51743 / NCIMB 8052) (Clostridium acetobutylicum).